We begin with the raw amino-acid sequence, 283 residues long: Putative 4-diphosphocytidyl-2-C-methyl-D-erythritol kinase (283 aa).

The active site involves Lys-11. Pro-95–Ser-105 contacts ATP. Asp-137 is a catalytic residue.

Belongs to the GHMP kinase family. IspE subfamily.

It catalyses the reaction 4-CDP-2-C-methyl-D-erythritol + ATP = 4-CDP-2-C-methyl-D-erythritol 2-phosphate + ADP + H(+). Catalyzes the phosphorylation of the position 2 hydroxy group of 4-diphosphocytidyl-2C-methyl-D-erythritol. The polypeptide is Putative 4-diphosphocytidyl-2-C-methyl-D-erythritol kinase (Streptococcus equi subsp. equi (strain 4047)).